Consider the following 171-residue polypeptide: uncharacterized protein (171 aa).

This is an uncharacterized protein from Ureaplasma parvum serovar 3 (strain ATCC 700970).